A 524-amino-acid polypeptide reads, in one-letter code: MILDRDLNLEQFISVVRHGEQVELSAAARERIARARTVIEQIVEGDTPIYGVNTGFGKFENVQIDRSQLAQLQHNLIVSHAIGMGEPLPAEVVRGMLLLRAQSLSLGHSGVRVEVVELLLALLNADALPVVPSQGSVGASGDLAPLAHLALGLIGLGDIEYQGQVRPAADVLAELGLSPVQLQAKEGLALINGTQLMGSLLALALHDAQVLLGTANLAAAMTVEARYGSHRPFQPDVVGLRPHPGALAVAAELREFLAGSEIAPSHLTGDGKVQDAYSLRAVPQVHGATWDALAQAERVLAVEFASVTDNPLIFPETGEVVSGGNFHGQPLAVTIDALKVAVAELGSISERRTEQLLNPALSGLPAFLTPNGGLNSGFMIAQYTSAALVSENKVLSHPASVDSIPTSANQEDHVSMGAHAARQLRQIVANVQTVLSIELLCAAQGLDFQQLRAGRGVQAAYEYVRTFVPTLTEDRYFRPDLLRLRGELVSGELLRVAQAADTQAPAPAKLPDSGDEDRDTTSRH.

The 5-imidazolinone (Ala-Gly) cross-link spans 139–141 (ASG). Residue Ser140 is modified to 2,3-didehydroalanine (Ser). The tract at residues 500 to 524 (ADTQAPAPAKLPDSGDEDRDTTSRH) is disordered.

The protein belongs to the PAL/histidase family. Post-translationally, contains an active site 4-methylidene-imidazol-5-one (MIO), which is formed autocatalytically by cyclization and dehydration of residues Ala-Ser-Gly.

It localises to the cytoplasm. The enzyme catalyses L-histidine = trans-urocanate + NH4(+). Its pathway is amino-acid degradation; L-histidine degradation into L-glutamate; N-formimidoyl-L-glutamate from L-histidine: step 1/3. This Deinococcus radiodurans (strain ATCC 13939 / DSM 20539 / JCM 16871 / CCUG 27074 / LMG 4051 / NBRC 15346 / NCIMB 9279 / VKM B-1422 / R1) protein is Histidine ammonia-lyase (hutH).